Here is a 315-residue protein sequence, read N- to C-terminus: ATP synthase gamma chain (315 aa).

The protein belongs to the ATPase gamma chain family. F-type ATPases have 2 components, CF(1) - the catalytic core - and CF(0) - the membrane proton channel. CF(1) has five subunits: alpha(3), beta(3), gamma(1), delta(1), epsilon(1). CF(0) has three main subunits: a, b and c.

The protein resides in the cellular thylakoid membrane. Produces ATP from ADP in the presence of a proton gradient across the membrane. The gamma chain is believed to be important in regulating ATPase activity and the flow of protons through the CF(0) complex. This is ATP synthase gamma chain from Microcystis aeruginosa (strain NIES-843 / IAM M-2473).